The chain runs to 504 residues: Deoxyguanosinetriphosphate triphosphohydrolase (504 aa).

An HD domain is found at 66 to 273; the sequence is RLTHSLEVQQ…MEAADDISYC (208 aa).

The protein belongs to the dGTPase family. Type 1 subfamily. Homotetramer. Mg(2+) serves as cofactor.

It carries out the reaction dGTP + H2O = 2'-deoxyguanosine + triphosphate + H(+). Functionally, dGTPase preferentially hydrolyzes dGTP over the other canonical NTPs. The polypeptide is Deoxyguanosinetriphosphate triphosphohydrolase (Cronobacter sakazakii (strain ATCC BAA-894) (Enterobacter sakazakii)).